The sequence spans 253 residues: Phosphate import ATP-binding protein PstB 1 (253 aa).

One can recognise an ABC transporter domain in the interval 7–248; the sequence is LQIRDLSVYY…PKRKETEDYI (242 aa). An ATP-binding site is contributed by 39-46; the sequence is GPSGSGKS.

It belongs to the ABC transporter superfamily. Phosphate importer (TC 3.A.1.7) family. In terms of assembly, the complex is composed of two ATP-binding proteins (PstB), two transmembrane proteins (PstC and PstA) and a solute-binding protein (PstS).

It is found in the cell membrane. The enzyme catalyses phosphate(out) + ATP + H2O = ADP + 2 phosphate(in) + H(+). Its function is as follows. Part of the ABC transporter complex PstSACB involved in phosphate import. Responsible for energy coupling to the transport system. In Streptococcus pyogenes serotype M2 (strain MGAS10270), this protein is Phosphate import ATP-binding protein PstB 1.